Reading from the N-terminus, the 152-residue chain is MKRDKRLEIIKEIVTNNKISTQEELQSLLLERGVEVTQATLSRDIRKLNIIKKRDKGESFYSFLTSGNSKINSDLQLYFYNFVISAKSVGALVVIRTKLGEADVLANALDDERDSRTDILGTIAGADTLLVICASEKAANILTAEIKYILLG.

This sequence belongs to the ArgR family.

It localises to the cytoplasm. The protein operates within amino-acid biosynthesis; L-arginine biosynthesis [regulation]. In terms of biological role, regulates arginine biosynthesis genes. The protein is Arginine repressor of Lactococcus lactis subsp. lactis (strain IL1403) (Streptococcus lactis).